A 266-amino-acid chain; its full sequence is Apolipoprotein A-I (266 aa).

A signal peptide spans 1 to 18 (MKAVVLTLAVLFLTGSQA). 2 consecutive repeat copies span residues 67–88 (LKLL…EQLG) and 89–110 (PVTQ…QEMN). A 10 X approximate tandem repeats region spans residues 67–266 (LKLLDNWDSL…EEASKKLNAQ (200 aa)). M109 carries the post-translational modification Methionine sulfoxide. The stretch at 111–121 (KDVEEMKTKVQ) is one 3; half-length repeat. A run of 5 repeats spans residues 122-143 (PYLD…QKVE), 144-165 (PLGS…EKLS), 166-187 (PLGE…TQLA), 188-209 (PYSE…ESGG), and 210-231 (ASLA…EKAK). The 9; half-length repeat unit spans residues 232–242 (PALEDLRQGLL). Copy 10 of the repeat occupies 243–266 (PVLESFKVSLLSALEEASKKLNAQ).

Belongs to the apolipoprotein A1/A4/E family. Homodimer. Interacts with APOA1BP and CLU. Component of a sperm activating protein complex (SPAP), consisting of APOA1, an immunoglobulin heavy chain, an immunoglobulin light chain and albumin. Interacts with NDRG1. Interacts with SCGB3A2. Interacts with NAXE and YJEFN3. Post-translationally, glycosylated. In terms of processing, palmitoylated. Phosphorylation sites are present in the extracellular medium. As to expression, major protein of plasma HDL, also found in chylomicrons.

The protein localises to the secreted. Functionally, participates in the reverse transport of cholesterol from tissues to the liver for excretion by promoting cholesterol efflux from tissues and by acting as a cofactor for the lecithin cholesterol acyltransferase (LCAT). As part of the SPAP complex, activates spermatozoa motility. In Carlito syrichta (Philippine tarsier), this protein is Apolipoprotein A-I (APOA1).